The sequence spans 181 residues: RNA pyrophosphohydrolase (181 aa).

In terms of domain architecture, Nudix hydrolase spans 6-150 (GYRPNVGIII…KCEVYRCALK (145 aa)). Residues 38-59 (GGIKEGETPEQAMYRELYEEVG) carry the Nudix box motif.

The protein belongs to the Nudix hydrolase family. RppH subfamily. A divalent metal cation serves as cofactor.

In terms of biological role, accelerates the degradation of transcripts by removing pyrophosphate from the 5'-end of triphosphorylated RNA, leading to a more labile monophosphorylated state that can stimulate subsequent ribonuclease cleavage. The protein is RNA pyrophosphohydrolase of Psychromonas ingrahamii (strain DSM 17664 / CCUG 51855 / 37).